The sequence spans 320 residues: tRNA N6-adenosine threonylcarbamoyltransferase (320 aa).

Positions 113 and 117 each coordinate Fe cation. Substrate-binding positions include 143-147, aspartate 176, glycine 189, aspartate 193, and asparagine 281; that span reads VVSGG. Residue aspartate 305 coordinates Fe cation.

Belongs to the KAE1 / TsaD family. Requires Fe(2+) as cofactor.

The protein localises to the cytoplasm. The catalysed reaction is L-threonylcarbamoyladenylate + adenosine(37) in tRNA = N(6)-L-threonylcarbamoyladenosine(37) in tRNA + AMP + H(+). Functionally, required for the formation of a threonylcarbamoyl group on adenosine at position 37 (t(6)A37) in tRNAs that read codons beginning with adenine. Is involved in the transfer of the threonylcarbamoyl moiety of threonylcarbamoyl-AMP (TC-AMP) to the N6 group of A37, together with TsaE and TsaB. TsaD likely plays a direct catalytic role in this reaction. This is tRNA N6-adenosine threonylcarbamoyltransferase from Mycoplasmoides gallisepticum (strain R(low / passage 15 / clone 2)) (Mycoplasma gallisepticum).